Here is a 466-residue protein sequence, read N- to C-terminus: NADH-quinone oxidoreductase subunit N (466 aa).

A run of 14 helical transmembrane segments spans residues 9-29, 33-53, 68-88, 100-120, 122-142, 157-177, 190-210, 232-252, 263-283, 289-309, 314-334, 359-379, 394-416, and 438-458; these read LIPL…GAIV, CGTV…MLAP, PFTR…LLLA, EEYP…ASAA, FLTL…LVAY, LLMG…LYGA, SAAG…GLAF, VVAF…LLIL, APLW…ALLQ, MLAY…LSGG, AAAF…GALA, GVVL…VGFV, APLA…RVVV, and LSLG…GPLF.

Belongs to the complex I subunit 2 family. As to quaternary structure, NDH-1 is composed of 14 different subunits. Subunits NuoA, H, J, K, L, M, N constitute the membrane sector of the complex.

It localises to the cell inner membrane. It carries out the reaction a quinone + NADH + 5 H(+)(in) = a quinol + NAD(+) + 4 H(+)(out). Functionally, NDH-1 shuttles electrons from NADH, via FMN and iron-sulfur (Fe-S) centers, to quinones in the respiratory chain. The immediate electron acceptor for the enzyme in this species is believed to be ubiquinone. Couples the redox reaction to proton translocation (for every two electrons transferred, four hydrogen ions are translocated across the cytoplasmic membrane), and thus conserves the redox energy in a proton gradient. This chain is NADH-quinone oxidoreductase subunit N, found in Geobacter metallireducens (strain ATCC 53774 / DSM 7210 / GS-15).